Consider the following 270-residue polypeptide: MTSLKQQPPHLLRGIPLAVRKLKKAFGAREVLKDIDLHIPAGQFVAIVGRSGCGKSTLLRLLAGLDKPTQGQLLAGSAPLDDAREDTRLMFQEARLLPWKKIIDNVGLGLSGDWRAQALEALEAVGLAERANEWPAALSGGQKQRVALARALIHKPRLLLLDEPLGALDALTRIEMQQLIEKLWGQYGFTVLLVTHDVSEAVAIADRVILIEEGQIGLDLLVDLPRPRVRGSHRLAALEAEVLNRVLALPGSPPDPEPFSPLPTQLRWAN.

Residues 17-238 (LAVRKLKKAF…VRGSHRLAAL (222 aa)) form the ABC transporter domain. 49 to 56 (GRSGCGKS) is an ATP binding site.

This sequence belongs to the ABC transporter superfamily. Aliphatic sulfonates importer (TC 3.A.1.17.2) family. The complex is composed of two ATP-binding proteins (SsuB), two transmembrane proteins (SsuC) and a solute-binding protein (SsuA).

It localises to the cell inner membrane. The catalysed reaction is ATP + H2O + aliphatic sulfonate-[sulfonate-binding protein]Side 1 = ADP + phosphate + aliphatic sulfonateSide 2 + [sulfonate-binding protein]Side 1.. Part of the ABC transporter complex SsuABC involved in aliphatic sulfonates import. Responsible for energy coupling to the transport system. The protein is Aliphatic sulfonates import ATP-binding protein SsuB 3 of Pseudomonas syringae pv. syringae (strain B728a).